A 165-amino-acid polypeptide reads, in one-letter code: MNIKENDLPGIGKKFEIETRSHEKMTIIIHDDGRREIYRFNDRDPDELLSNISLDDSEARQIAAILGGMVYKPQALESIEMAFSDLIIEWFKVEKGAKSIGRTLGELDVRQNYDVTVIAIIKHNQEKLLNPGADSIIEENDTLVLSGERKHLKKLIHDFLSGEGV.

Positions 76-161 (LESIEMAFSD…LKKLIHDFLS (86 aa)) constitute an RCK C-terminal domain.

In terms of assembly, the transporter is composed of the integral membrane protein KhtU and the regulatory protein KhtT.

Its subcellular location is the cell membrane. With respect to regulation, binds cyclic di-AMP (c-di-AMP), which may regulate the activity. Functionally, required for activity of the potassium/proton antiporter KhtU. Involved in protection of the cell from methylglyoxal, a toxic by-product of glycolysis. This Bacillus subtilis (strain 168) protein is K(+)/H(+) antiporter subunit KhtT.